A 294-amino-acid polypeptide reads, in one-letter code: N-acetylmuramic acid 6-phosphate etherase (294 aa).

Residues 54 to 217 (VTKSFEEEGR…STASMIGVGK (164 aa)) form the SIS domain. Glu-82 acts as the Proton donor in catalysis. The active site involves Glu-113.

It belongs to the GCKR-like family. MurNAc-6-P etherase subfamily. As to quaternary structure, homodimer.

The enzyme catalyses N-acetyl-D-muramate 6-phosphate + H2O = N-acetyl-D-glucosamine 6-phosphate + (R)-lactate. It functions in the pathway amino-sugar metabolism; N-acetylmuramate degradation. Its function is as follows. Specifically catalyzes the cleavage of the D-lactyl ether substituent of MurNAc 6-phosphate, producing GlcNAc 6-phosphate and D-lactate. In Bacillus mycoides (strain KBAB4) (Bacillus weihenstephanensis), this protein is N-acetylmuramic acid 6-phosphate etherase.